We begin with the raw amino-acid sequence, 242 residues long: MASWDDEDFEVPAAATPAVPANWDDDEEEDVMDSWDAEEPTKAPGPKTTVAAPKKAQRQQIAKIEREMAAMKLKPEDASTKRDRQRQAELDSDMMNASELFGGTGGIADSAAKAEAAPAPAAPAAPMKLSDLAIFHPKEKKDFTNLKETLAPILTDLNKTSPLAYPDFAITFTKALAEPLKVEQLRKLISTLNAYQNEKIREEKAARGKKKKPGLAAASAKINDDKDTSTFNDNFDDFDDFM.

Residues 1–10 (MASWDDEDFE) show a composition bias toward acidic residues. Disordered regions lie at residues 1–58 (MASW…KAQR), 71–97 (MKLKPEDASTKRDRQRQAELDSDMMNA), and 201–242 (REEK…DDFM). The segment covering 11–21 (VPAAATPAVPA) has biased composition (low complexity). A compositionally biased stretch (acidic residues) spans 23 to 38 (WDDDEEEDVMDSWDAE). The segment covering 71 to 89 (MKLKPEDASTKRDRQRQAE) has biased composition (basic and acidic residues).

It belongs to the eIF-3 subunit J family. As to quaternary structure, component of the eukaryotic translation initiation factor 3 (eIF-3) complex.

The protein resides in the cytoplasm. Its function is as follows. Component of the eukaryotic translation initiation factor 3 (eIF-3) complex, which is involved in protein synthesis of a specialized repertoire of mRNAs and, together with other initiation factors, stimulates binding of mRNA and methionyl-tRNAi to the 40S ribosome. The eIF-3 complex specifically targets and initiates translation of a subset of mRNAs involved in cell proliferation. The sequence is that of Eukaryotic translation initiation factor 3 subunit J from Yarrowia lipolytica (strain CLIB 122 / E 150) (Yeast).